Consider the following 95-residue polypeptide: Aspartyl/glutamyl-tRNA(Asn/Gln) amidotransferase subunit C (95 aa).

Belongs to the GatC family. As to quaternary structure, heterotrimer of A, B and C subunits.

It carries out the reaction L-glutamyl-tRNA(Gln) + L-glutamine + ATP + H2O = L-glutaminyl-tRNA(Gln) + L-glutamate + ADP + phosphate + H(+). It catalyses the reaction L-aspartyl-tRNA(Asn) + L-glutamine + ATP + H2O = L-asparaginyl-tRNA(Asn) + L-glutamate + ADP + phosphate + 2 H(+). In terms of biological role, allows the formation of correctly charged Asn-tRNA(Asn) or Gln-tRNA(Gln) through the transamidation of misacylated Asp-tRNA(Asn) or Glu-tRNA(Gln) in organisms which lack either or both of asparaginyl-tRNA or glutaminyl-tRNA synthetases. The reaction takes place in the presence of glutamine and ATP through an activated phospho-Asp-tRNA(Asn) or phospho-Glu-tRNA(Gln). The chain is Aspartyl/glutamyl-tRNA(Asn/Gln) amidotransferase subunit C from Pseudomonas putida (strain ATCC 700007 / DSM 6899 / JCM 31910 / BCRC 17059 / LMG 24140 / F1).